The chain runs to 592 residues: Putative phosphatidylinositol 4-kinase alpha-like protein P2 (592 aa).

The tract at residues 180 to 318 (EQLVEENTGS…ISWQAAIFKL (139 aa)) is pleckstrin homology (PH) domain conferring phosphoinositide binding specificity. The PI3K/PI4K catalytic domain maps to 275-576 (KVKRCGVSEL…VIQSCFLSNR (302 aa)). The G-loop stretch occupies residues 281-287 (VSELEKE). The tract at residues 441-449 (QIKDRHNGN) is catalytic loop. An activation loop region spans residues 460–484 (HIDFGFMFESSPGGNLGWEPDIKLT).

Belongs to the PI3/PI4-kinase family. Type III PI4K subfamily.

The protein is Putative phosphatidylinositol 4-kinase alpha-like protein P2 (PI4KAP2) of Homo sapiens (Human).